We begin with the raw amino-acid sequence, 316 residues long: L-lactate dehydrogenase (316 aa).

NAD(+) is bound by residues methionine 14, methionine 14 to leucine 150, isoleucine 15, aspartate 35, tyrosine 67, glycine 81, phenylalanine 82, valine 125, asparagine 127, and leucine 150. Residue arginine 95 coordinates substrate. Positions 158 and 182 each coordinate substrate. Histidine 182 acts as the Proton acceptor in catalysis.

Belongs to the LDH/MDH superfamily. LDH family. Homotetramer.

The catalysed reaction is (S)-lactate + NAD(+) = pyruvate + NADH + H(+). The protein operates within fermentation; pyruvate fermentation to lactate; (S)-lactate from pyruvate: step 1/1. The chain is L-lactate dehydrogenase from Plasmodium falciparum (isolate CDC / Honduras).